The sequence spans 493 residues: Lysine--tRNA ligase (493 aa).

Residues Glu-403 and Glu-410 each coordinate Mg(2+).

The protein belongs to the class-II aminoacyl-tRNA synthetase family. As to quaternary structure, homodimer. Mg(2+) serves as cofactor.

Its subcellular location is the cytoplasm. The enzyme catalyses tRNA(Lys) + L-lysine + ATP = L-lysyl-tRNA(Lys) + AMP + diphosphate. The polypeptide is Lysine--tRNA ligase (Wigglesworthia glossinidia brevipalpis).